Consider the following 283-residue polypeptide: Elongation factor Ts (283 aa).

Residues 80–83 (TDFV) form an involved in Mg(2+) ion dislocation from EF-Tu region.

It belongs to the EF-Ts family.

Its subcellular location is the cytoplasm. Functionally, associates with the EF-Tu.GDP complex and induces the exchange of GDP to GTP. It remains bound to the aminoacyl-tRNA.EF-Tu.GTP complex up to the GTP hydrolysis stage on the ribosome. The polypeptide is Elongation factor Ts (Serratia proteamaculans (strain 568)).